The following is a 433-amino-acid chain: Coiled-coil domain-containing protein 71 (433 aa).

Ser-125 is modified (phosphoserine). 3 disordered regions span residues 204–256 (LKVR…GCSA), 284–310 (QTKT…KAAV), and 325–396 (KAAQ…RKSQ). 2 stretches are compositionally biased toward basic residues: residues 216–230 (KAPR…KHLT) and 288–306 (VRVR…RAKA). Positions 260 to 330 (KTVQAQASQT…QAKAKAAQTK (71 aa)) form a coiled coil.

In Mus musculus (Mouse), this protein is Coiled-coil domain-containing protein 71 (Ccdc71).